A 377-amino-acid polypeptide reads, in one-letter code: Nitric oxide reductase FlRd-NAD(+) reductase (377 aa).

The protein belongs to the FAD-dependent oxidoreductase family. FAD serves as cofactor.

Its subcellular location is the cytoplasm. The enzyme catalyses 2 reduced [nitric oxide reductase rubredoxin domain] + NAD(+) + H(+) = 2 oxidized [nitric oxide reductase rubredoxin domain] + NADH. Its pathway is nitrogen metabolism; nitric oxide reduction. Functionally, one of at least two accessory proteins for anaerobic nitric oxide (NO) reductase. Reduces the rubredoxin moiety of NO reductase. This chain is Nitric oxide reductase FlRd-NAD(+) reductase, found in Escherichia coli O7:K1 (strain IAI39 / ExPEC).